A 207-amino-acid polypeptide reads, in one-letter code: Large ribosomal subunit protein uL4 (207 aa).

The segment at 50–76 (AVKNRSAVSGGGRKPWKQKGTGRARQG) is disordered.

The protein belongs to the universal ribosomal protein uL4 family. In terms of assembly, part of the 50S ribosomal subunit.

Its function is as follows. One of the primary rRNA binding proteins, this protein initially binds near the 5'-end of the 23S rRNA. It is important during the early stages of 50S assembly. It makes multiple contacts with different domains of the 23S rRNA in the assembled 50S subunit and ribosome. In terms of biological role, forms part of the polypeptide exit tunnel. The chain is Large ribosomal subunit protein uL4 from Staphylococcus aureus (strain MRSA252).